A 911-amino-acid polypeptide reads, in one-letter code: DNA ligase 4 (911 aa).

Residues glutamate 271, threonine 272, lysine 273, leucine 274, arginine 278, glutamate 331, lysine 345, phenylalanine 367, glutamate 427, lysine 432, lysine 449, and lysine 451 each coordinate ATP. Catalysis depends on lysine 273, which acts as the N6-AMP-lysine intermediate. Glutamate 331 contacts Mg(2+). Mg(2+) is bound at residue glutamate 427. A required for catalytic activity region spans residues 610-620 (LASKHLYIGGD). 2 BRCT domains span residues 654 to 743 (KISN…PRFM) and 808 to 911 (SPLS…QYLI).

The protein belongs to the ATP-dependent DNA ligase family. Interacts with XRCC4; the LIG4-XRCC4 subcomplex has a 1:2 stoichiometry and XRCC4 is required for LIG4 stability. Component of the core long-range non-homologous end joining (NHEJ) complex (also named DNA-PK complex) composed of PRKDC, LIG4, XRCC4, XRCC6/Ku70, XRCC5/Ku86 and NHEJ1/XLF. Additional component of the NHEJ complex includes PAXX. Following autophosphorylation, PRKDC dissociates from DNA, leading to formation of the short-range NHEJ complex, composed of LIG4, XRCC4, XRCC6/Ku70, XRCC5/Ku86 and NHEJ1/XLF. Interacts with DCLRE1C; the interaction is direct. Interacts with APLF. Requires Mg(2+) as cofactor. In terms of tissue distribution, testis, thymus, prostate and heart.

The protein localises to the nucleus. The enzyme catalyses ATP + (deoxyribonucleotide)n-3'-hydroxyl + 5'-phospho-(deoxyribonucleotide)m = (deoxyribonucleotide)n+m + AMP + diphosphate.. Its function is as follows. DNA ligase involved in DNA non-homologous end joining (NHEJ); required for double-strand break (DSB) repair and V(D)J recombination. Catalyzes the NHEJ ligation step of the broken DNA during DSB repair by resealing the DNA breaks after the gap filling is completed. Joins single-strand breaks in a double-stranded polydeoxynucleotide in an ATP-dependent reaction. LIG4 is mechanistically flexible: it can ligate nicks as well as compatible DNA overhangs alone, while in the presence of XRCC4, it can ligate ends with 2-nucleotides (nt) microhomology and 1-nt gaps. Forms a subcomplex with XRCC4; the LIG4-XRCC4 subcomplex is responsible for the NHEJ ligation step and XRCC4 enhances the joining activity of LIG4. Binding of the LIG4-XRCC4 complex to DNA ends is dependent on the assembly of the DNA-dependent protein kinase complex DNA-PK to these DNA ends. LIG4 regulates nuclear localization of XRCC4. The sequence is that of DNA ligase 4 from Homo sapiens (Human).